Here is a 450-residue protein sequence, read N- to C-terminus: 3-phosphoshikimate 1-carboxyvinyltransferase (450 aa).

Lysine 23, serine 24, and arginine 28 together coordinate 3-phosphoshikimate. Lysine 23 contacts phosphoenolpyruvate. Phosphoenolpyruvate-binding residues include glycine 96 and arginine 124. Residues serine 167, serine 168, glutamine 169, serine 196, glutamate 311, and histidine 340 each coordinate 3-phosphoshikimate. Glutamine 169 provides a ligand contact to phosphoenolpyruvate. Glutamate 311 serves as the catalytic Proton acceptor. Positions 344, 385, and 410 each coordinate phosphoenolpyruvate. The segment at glycine 426–glycine 450 is disordered.

The protein belongs to the EPSP synthase family. Monomer.

It localises to the cytoplasm. The catalysed reaction is 3-phosphoshikimate + phosphoenolpyruvate = 5-O-(1-carboxyvinyl)-3-phosphoshikimate + phosphate. Its pathway is metabolic intermediate biosynthesis; chorismate biosynthesis; chorismate from D-erythrose 4-phosphate and phosphoenolpyruvate: step 6/7. Functionally, catalyzes the transfer of the enolpyruvyl moiety of phosphoenolpyruvate (PEP) to the 5-hydroxyl of shikimate-3-phosphate (S3P) to produce enolpyruvyl shikimate-3-phosphate and inorganic phosphate. The polypeptide is 3-phosphoshikimate 1-carboxyvinyltransferase (Mycobacterium tuberculosis (strain ATCC 25177 / H37Ra)).